Consider the following 447-residue polypeptide: MSVNLSKNGAALQGAYKDVLDEKTKTDWALYTYEGNSNDIRLAETGDGGLEELVEELSSGKVMYAFCRVKDPNSGLPKFVLVNWTGEGVKDARKGACANHVSTMANFLKGAHVTINARAEEDVEPESIMEKVAKASGANYNFHKESKRGNEGPQGPVGSVYQKTNAMSEIKRVGKENFWAKAEKDEEERRMEENRRANSEKDRLERERKEREQREAETREQRFRERAKEIDAQRKEQEETEKQQTVPASQRSVNPRETFLQKERSLPESGPVSAQPGRLRSPFLQKSACQPESSPPPSPVHRVQEPPSPPVYPAHQTPPESPVPPVSHPPESTVHVKEQCTASQQEEENIYQDATEDQNIYEDTTENQNIYEDTPQEEPVYEIEVEEEKGVCARALYDYQAADDTEISFDPDDLITQIQFIDEGWWRGFSPAGHFGMFPANYVELLE.

Residues 2–133 (SVNLSKNGAA…EPESIMEKVA (132 aa)) form the ADF-H domain. Disordered regions lie at residues 141-160 (NFHK…VGSV) and 184-368 (KDEE…TENQ). Positions 180 to 245 (AKAEKDEEER…EQEETEKQQT (66 aa)) form a coiled coil. The span at 184-242 (KDEEERRMEENRRANSEKDRLERERKEREQREAETREQRFRERAKEIDAQRKEQEETEK) shows a compositional bias: basic and acidic residues. Over residues 246–255 (VPASQRSVNP) the composition is skewed to polar residues. A compositionally biased stretch (pro residues) spans 319 to 328 (PESPVPPVSH). A compositionally biased stretch (acidic residues) spans 345–365 (QEEENIYQDATEDQNIYEDTT). An SH3 domain is found at 388–447 (EKGVCARALYDYQAADDTEISFDPDDLITQIQFIDEGWWRGFSPAGHFGMFPANYVELLE).

It belongs to the ABP1 family.

It localises to the cytoplasm. The protein resides in the cytoskeleton. It is found in the cell projection. The protein localises to the lamellipodium. Its subcellular location is the ruffle. It localises to the cell cortex. The protein resides in the cytosol. It is found in the synapse. The protein localises to the perikaryon. Its subcellular location is the neuron projection. It localises to the cell membrane. The protein resides in the cytoplasmic vesicle. It is found in the clathrin-coated vesicle membrane. The protein localises to the golgi apparatus membrane. Its subcellular location is the podosome. It localises to the early endosome. The protein resides in the dendrite. It is found in the postsynaptic density. Functionally, adapter protein that binds F-actin and dynamin, and thereby plays a role in receptor-mediated endocytosis. Plays a role in the reorganization of the actin cytoskeleton, formation of cell projections, such as neurites, in neuron morphogenesis and synapse formation. Does not bind G-actin and promote actin polymerization by itself, but excerts its functions by interaction with other proteins. Required for the formation of organized podosome rosettes. In Xenopus laevis (African clawed frog), this protein is Drebrin-like protein A (dbnl-a).